The primary structure comprises 183 residues: Adenine phosphoribosyltransferase (183 aa).

Belongs to the purine/pyrimidine phosphoribosyltransferase family. As to quaternary structure, homodimer.

It localises to the cytoplasm. The enzyme catalyses AMP + diphosphate = 5-phospho-alpha-D-ribose 1-diphosphate + adenine. Its pathway is purine metabolism; AMP biosynthesis via salvage pathway; AMP from adenine: step 1/1. Functionally, catalyzes a salvage reaction resulting in the formation of AMP, that is energically less costly than de novo synthesis. The protein is Adenine phosphoribosyltransferase of Shewanella oneidensis (strain ATCC 700550 / JCM 31522 / CIP 106686 / LMG 19005 / NCIMB 14063 / MR-1).